The following is a 506-amino-acid chain: Histone acetyltransferase esa-1 (506 aa).

The tract at residues 1 to 24 (MSPPGGDATVGSDEKRQKGKATPD) is disordered. Positions 26 to 78 (IKMGCIAMVMKEGQLRRAEILSIKDTKSGRQFYCNFDNFNKRLDEWVPAARID) constitute a Tudor-knot domain. Residues 82–215 (DVEWPNPDKD…LRTSGSMTQN (134 aa)) form a disordered region. Positions 87–98 (NPDKDKQKDAKT) are enriched in basic and acidic residues. Residues 109–120 (QPSKKNNQKKAS) are compositionally biased toward basic residues. Positions 167-178 (GGDKGVKRKADE) are enriched in basic and acidic residues. The region spanning 220-494 (SRIRNISKVE…IDPERIQWKP (275 aa)) is the MYST-type HAT domain. A C2HC MYST-type zinc finger spans residues 253–278 (IYICEFCLSYYGELKSFVRHRQKCTL). The short motif at 303 to 324 (RTWCRNLCLLSKMFLDHKTLYY) is the ESA1-RPD3 motif element. At Lys-320 the chain carries N6-acetyllysine; by autocatalysis. Residues 361 to 365 (ACILT) and 370 to 376 (QRKGYGR) each bind acetyl-CoA. The active-site Proton donor/acceptor is the Glu-396. Position 400 (Ser-400) interacts with acetyl-CoA.

It belongs to the MYST (SAS/MOZ) family. In terms of assembly, component of the NuA4 histone acetyltransferase complex. Autoacetylation at Lys-320 is required for proper function.

Its subcellular location is the nucleus. The protein localises to the chromosome. The enzyme catalyses L-lysyl-[histone] + acetyl-CoA = N(6)-acetyl-L-lysyl-[histone] + CoA + H(+). It carries out the reaction L-lysyl-[protein] + acetyl-CoA = N(6)-acetyl-L-lysyl-[protein] + CoA + H(+). It catalyses the reaction 2-hydroxyisobutanoyl-CoA + L-lysyl-[protein] = N(6)-(2-hydroxyisobutanoyl)-L-lysyl-[protein] + CoA + H(+). The catalysed reaction is (2E)-butenoyl-CoA + L-lysyl-[protein] = N(6)-(2E)-butenoyl-L-lysyl-[protein] + CoA + H(+). In terms of biological role, catalytic component of the NuA4 histone acetyltransferase (HAT) complex which is involved in epigenetic transcriptional activation of selected genes principally by acetylation of nucleosomal histones H4, H3, H2B, H2A and H2A variant H2A.Z. Acetylates histone H4 to form H4K5ac, H4K8ac, H4K12ac and H4K16ac, histone H3 to form H3K14ac, and histone H2A to form H2AK4ac and H2AK7ac. The NuA4 complex is involved in the DNA damage response and is required for chromosome segregation. The NuA4 complex plays a direct role in repair of DNA double-strand breaks (DSBs) through homologous recombination. Recruitment to promoters depends on H3K4me. Also acetylates non-histone proteins. In addition to protein acetyltransferase, can use different acyl-CoA substrates, such as 2-hydroxyisobutanoyl-CoA (2-hydroxyisobutyryl-CoA) or (2E)-butenoyl-CoA (crotonyl-CoA), and is able to mediate protein 2-hydroxyisobutyrylation and crotonylation, respectively. In Neurospora crassa (strain ATCC 24698 / 74-OR23-1A / CBS 708.71 / DSM 1257 / FGSC 987), this protein is Histone acetyltransferase esa-1 (esa-1).